The sequence spans 314 residues: L-lactate dehydrogenase (314 aa).

NAD(+)-binding positions include Val17, Asp38, Lys43, Tyr69, and 83-84 (GA). The substrate site is built by Gln86 and Arg92. NAD(+) contacts are provided by residues Ser105, 122-124 (ASN), and Ser147. 124 to 127 (NPVD) is a substrate binding site. Residue 152–155 (DSAR) coordinates substrate. Arg157 and His172 together coordinate beta-D-fructose 1,6-bisphosphate. Residue His179 is the Proton acceptor of the active site. A Phosphotyrosine modification is found at Tyr223. Thr232 is a substrate binding site.

It belongs to the LDH/MDH superfamily. LDH family. Homotetramer.

The protein localises to the cytoplasm. The enzyme catalyses (S)-lactate + NAD(+) = pyruvate + NADH + H(+). The protein operates within fermentation; pyruvate fermentation to lactate; (S)-lactate from pyruvate: step 1/1. Its activity is regulated as follows. Allosterically activated by fructose 1,6-bisphosphate (FBP). In terms of biological role, catalyzes the conversion of lactate to pyruvate. This is L-lactate dehydrogenase from Corynebacterium glutamicum (strain R).